The primary structure comprises 540 residues: Ipecac alkaloid beta-glucosidase 9 (540 aa).

Residues Gln36, His140, 185-186 (NE), Tyr350, Glu421, Trp470, and Phe486 each bind a beta-D-glucoside. The active-site Proton donor is the Glu186. Glu421 acts as the Nucleophile in catalysis.

Belongs to the glycosyl hydrolase 1 family.

Its subcellular location is the cytoplasm. It is found in the cytosol. The catalysed reaction is deacetylipecoside + H2O = deacetylipecoside aglycone + D-glucose. It catalyses the reaction deacetylisoipecoside + H2O = deacetylisoipecoside aglycone + D-glucose. Its pathway is alkaloid biosynthesis. In terms of biological role, beta-glucosidase catalyzing deglucosylation on N-deacetylisoipecoside and N-deacetylipecoside. The polypeptide is Ipecac alkaloid beta-glucosidase 9 (Carapichea ipecacuanha (Ipecac)).